Reading from the N-terminus, the 928-residue chain is Echinoderm microtubule-associated protein-like 4 (928 aa).

Positions 1–189 (MDGFAGSLDD…IPSDVENYDD (189 aa)) are microtubule-binding. Residues 14 to 63 (AASTSDVQDRLSALELRVQQQEDEITVLKAALADVLRRLAISEDQVATVR) adopt a coiled-coil conformation. A disordered region spans residues 107 to 131 (SAAKSVKRSSTIEKSHNSWDASEES). Residues 116-131 (STIEKSHNSWDASEES) are compositionally biased toward basic and acidic residues. WD repeat units lie at residues 199-237 (LKLE…LFNY), 241-288 (TQRH…VWDS), 296-336 (VIGL…VWDW), 343-378 (AEIK…FWTW), 385-424 (RKQG…IWSK), 442-480 (QISR…MWDH), 485-521 (EREI…LRGT), 524-563 (DGFQ…LWNS), 567-604 (SLEW…VLDA), 610-646 (VSIH…LYNV), 653-692 (YSRY…YWDI), 702-760 (RSDC…LFQY), and 767-806 (APSH…QWRL). The segment at 821 to 928 (SSSAVNSPVV…ENQDDSSPLS (108 aa)) is disordered. Over residues 836-845 (QPNTPTNLPQ) the composition is skewed to polar residues. Residues 867 to 876 (DALEQPEELN) are compositionally biased toward acidic residues. A compositionally biased stretch (polar residues) spans 877 to 898 (EVQSEKCSSQPEGANGQEPSNE).

It belongs to the WD repeat EMAP family. As to quaternary structure, homotrimer; self-association is mediated by the N-terminal coiled coil.

The protein localises to the cytoplasm. Its subcellular location is the cytoskeleton. It localises to the spindle. The protein resides in the microtubule organizing center. It is found in the midbody. In terms of biological role, essential for the formation and stability of microtubules (MTs). Required for the organization of the mitotic spindle and for the proper attachment of kinetochores to MTs. Promotes the recruitment of NUDC to the mitotic spindle for mitotic progression. This Xenopus tropicalis (Western clawed frog) protein is Echinoderm microtubule-associated protein-like 4 (eml4).